Reading from the N-terminus, the 327-residue chain is MKQPVRVAVTGAAGNISYAMLFRIASGEMLGKDQPVILQLLEITPALDALKGVVMELEDCAFPLLAGVVQTDDATVAFKDADYALLVGARPRGPGMERKDLLEANAAIFSAQGKALNEVASRDVKVLVVGNPANTNALIAQRNAPDLDPRNFTAMTRLDHNRGMAQLAEETNSTVNDVKKMIIWGNHSSTQYPDLTECTVNGKPALEQVDRDWYENSYIPSVQKRGAAIIEARGASSAASAANAAIAHMRTWALGTDENDWVSMGVYSQGEYGIAKGLIYSFPCTCSNGDWKIVEGLDTSSDFSQEKMKATEQELSEERDAVEHLLP.

Position 11–17 (11–17 (GAAGNIS)) interacts with NAD(+). Residues Arg92 and Arg98 each coordinate substrate. Residues Asn105, Gln112, and 129–131 (VGN) contribute to the NAD(+) site. Substrate contacts are provided by Asn131 and Arg162. The active-site Proton acceptor is His187. The disordered stretch occupies residues 304–327 (SQEKMKATEQELSEERDAVEHLLP).

This sequence belongs to the LDH/MDH superfamily. MDH type 2 family.

It catalyses the reaction (S)-malate + NAD(+) = oxaloacetate + NADH + H(+). In terms of biological role, catalyzes the reversible oxidation of malate to oxaloacetate. The polypeptide is Malate dehydrogenase (Psychrobacter sp. (strain PRwf-1)).